The primary structure comprises 434 residues: Probable glucuronosyltransferase Os02g0520750 (434 aa).

Residues methionine 1–proline 10 lie on the Cytoplasmic side of the membrane. A helical; Signal-anchor for type II membrane protein membrane pass occupies residues alanine 11–alanine 31. Residues glycine 32–lysine 434 lie on the Lumenal side of the membrane. N-linked (GlcNAc...) asparagine glycans are attached at residues asparagine 160 and asparagine 421.

The protein belongs to the glycosyltransferase 47 family.

It localises to the golgi apparatus membrane. Functionally, involved in the synthesis of glucuronoxylan hemicellulose in secondary cell walls. This Oryza sativa subsp. japonica (Rice) protein is Probable glucuronosyltransferase Os02g0520750.